The chain runs to 388 residues: Succinate--CoA ligase [ADP-forming] subunit beta (388 aa).

The region spanning 9-244 is the ATP-grasp domain; the sequence is KEILRQAGVP…LDEEDPAEVE (236 aa). ATP-binding positions include Lys-46, 53 to 55, Glu-99, Ala-102, and Glu-107; that span reads GRG. Positions 199 and 213 each coordinate Mg(2+). Substrate-binding positions include Asn-264 and 321–323; that span reads GIM.

It belongs to the succinate/malate CoA ligase beta subunit family. Heterotetramer of two alpha and two beta subunits. Mg(2+) is required as a cofactor.

It catalyses the reaction succinate + ATP + CoA = succinyl-CoA + ADP + phosphate. The catalysed reaction is GTP + succinate + CoA = succinyl-CoA + GDP + phosphate. It functions in the pathway carbohydrate metabolism; tricarboxylic acid cycle; succinate from succinyl-CoA (ligase route): step 1/1. Its function is as follows. Succinyl-CoA synthetase functions in the citric acid cycle (TCA), coupling the hydrolysis of succinyl-CoA to the synthesis of either ATP or GTP and thus represents the only step of substrate-level phosphorylation in the TCA. The beta subunit provides nucleotide specificity of the enzyme and binds the substrate succinate, while the binding sites for coenzyme A and phosphate are found in the alpha subunit. This is Succinate--CoA ligase [ADP-forming] subunit beta from Albidiferax ferrireducens (strain ATCC BAA-621 / DSM 15236 / T118) (Rhodoferax ferrireducens).